Reading from the N-terminus, the 361-residue chain is Chorismate synthase (361 aa).

The NADP(+) site is built by Arg48 and Arg54. FMN-binding positions include Arg125–Ser127, Asn238–Ala239, Gly278, Lys293–Ser297, and Arg319.

It belongs to the chorismate synthase family. In terms of assembly, homotetramer. Requires FMNH2 as cofactor.

The catalysed reaction is 5-O-(1-carboxyvinyl)-3-phosphoshikimate = chorismate + phosphate. Its pathway is metabolic intermediate biosynthesis; chorismate biosynthesis; chorismate from D-erythrose 4-phosphate and phosphoenolpyruvate: step 7/7. Functionally, catalyzes the anti-1,4-elimination of the C-3 phosphate and the C-6 proR hydrogen from 5-enolpyruvylshikimate-3-phosphate (EPSP) to yield chorismate, which is the branch point compound that serves as the starting substrate for the three terminal pathways of aromatic amino acid biosynthesis. This reaction introduces a second double bond into the aromatic ring system. The polypeptide is Chorismate synthase (Escherichia coli O157:H7).